Here is a 477-residue protein sequence, read N- to C-terminus: Aspartyl/glutamyl-tRNA(Asn/Gln) amidotransferase subunit B (477 aa).

This sequence belongs to the GatB/GatE family. GatB subfamily. As to quaternary structure, heterotrimer of A, B and C subunits.

The enzyme catalyses L-glutamyl-tRNA(Gln) + L-glutamine + ATP + H2O = L-glutaminyl-tRNA(Gln) + L-glutamate + ADP + phosphate + H(+). It catalyses the reaction L-aspartyl-tRNA(Asn) + L-glutamine + ATP + H2O = L-asparaginyl-tRNA(Asn) + L-glutamate + ADP + phosphate + 2 H(+). Functionally, allows the formation of correctly charged Asn-tRNA(Asn) or Gln-tRNA(Gln) through the transamidation of misacylated Asp-tRNA(Asn) or Glu-tRNA(Gln) in organisms which lack either or both of asparaginyl-tRNA or glutaminyl-tRNA synthetases. The reaction takes place in the presence of glutamine and ATP through an activated phospho-Asp-tRNA(Asn) or phospho-Glu-tRNA(Gln). In Ligilactobacillus salivarius (strain UCC118) (Lactobacillus salivarius), this protein is Aspartyl/glutamyl-tRNA(Asn/Gln) amidotransferase subunit B.